A 460-amino-acid chain; its full sequence is Bifunctional protein GlmU (460 aa).

The interval Met1–Arg235 is pyrophosphorylase. UDP-N-acetyl-alpha-D-glucosamine-binding positions include Leu9–Gly12, Lys23, Gln76, and Gly81–Thr82. Asp109 is a binding site for Mg(2+). Residues Gly146, Glu161, Asn176, and Asn233 each coordinate UDP-N-acetyl-alpha-D-glucosamine. Asn233 provides a ligand contact to Mg(2+). Residues Val236–Asp256 are linker. The interval Gly257–Arg460 is N-acetyltransferase. 2 residues coordinate UDP-N-acetyl-alpha-D-glucosamine: Arg338 and Lys356. Catalysis depends on His368, which acts as the Proton acceptor. Tyr371 and Asn382 together coordinate UDP-N-acetyl-alpha-D-glucosamine. Residues Asn391–Tyr392 and Ala428 contribute to the acetyl-CoA site.

It in the N-terminal section; belongs to the N-acetylglucosamine-1-phosphate uridyltransferase family. The protein in the C-terminal section; belongs to the transferase hexapeptide repeat family. Homotrimer. The cofactor is Mg(2+).

The protein resides in the cytoplasm. It catalyses the reaction alpha-D-glucosamine 1-phosphate + acetyl-CoA = N-acetyl-alpha-D-glucosamine 1-phosphate + CoA + H(+). It carries out the reaction N-acetyl-alpha-D-glucosamine 1-phosphate + UTP + H(+) = UDP-N-acetyl-alpha-D-glucosamine + diphosphate. It participates in nucleotide-sugar biosynthesis; UDP-N-acetyl-alpha-D-glucosamine biosynthesis; N-acetyl-alpha-D-glucosamine 1-phosphate from alpha-D-glucosamine 6-phosphate (route II): step 2/2. It functions in the pathway nucleotide-sugar biosynthesis; UDP-N-acetyl-alpha-D-glucosamine biosynthesis; UDP-N-acetyl-alpha-D-glucosamine from N-acetyl-alpha-D-glucosamine 1-phosphate: step 1/1. Its pathway is bacterial outer membrane biogenesis; LPS lipid A biosynthesis. Its function is as follows. Catalyzes the last two sequential reactions in the de novo biosynthetic pathway for UDP-N-acetylglucosamine (UDP-GlcNAc). The C-terminal domain catalyzes the transfer of acetyl group from acetyl coenzyme A to glucosamine-1-phosphate (GlcN-1-P) to produce N-acetylglucosamine-1-phosphate (GlcNAc-1-P), which is converted into UDP-GlcNAc by the transfer of uridine 5-monophosphate (from uridine 5-triphosphate), a reaction catalyzed by the N-terminal domain. The polypeptide is Bifunctional protein GlmU (Bifidobacterium longum (strain NCC 2705)).